We begin with the raw amino-acid sequence, 228 residues long: Cytidylate kinase (228 aa).

ATP is bound at residue 10–18; sequence GPSGSGKGT.

This sequence belongs to the cytidylate kinase family. Type 1 subfamily.

It localises to the cytoplasm. It catalyses the reaction CMP + ATP = CDP + ADP. It carries out the reaction dCMP + ATP = dCDP + ADP. This is Cytidylate kinase from Acinetobacter baumannii (strain AB0057).